The sequence spans 118 residues: uncharacterized protein (118 aa).

Belongs to the transposase IS3/IS150/IS904 family.

This is an uncharacterized protein from Haemophilus influenzae (strain ATCC 51907 / DSM 11121 / KW20 / Rd).